The sequence spans 534 residues: MSIPKEIIFEEEAREFLLKGIKKLADVVAFTLGPKGRNVGLEKSWGAPTITNDGASIIRDIQLEDKYENMGVAMAKEVVQKIKEKCGDGTTSGALLLRSLVEAGIKNISSGASPIGIKRGMDKAVEVVVKAIEKAAIPVKTKQETRNVAVVSASGNQEIGELIAEAMEKVSNSGAITIEEGKGTETSIEVVKGMKFDRGYVSPYLCTNLEKMIVEMDHAQILLVDKKISSIHELLPVLQATAASGRELLIIAEDIDGDALSTLVVNKLRGTLKVAAVKAPGFGDRRKAMLQDIATLTAATVVSEELGISLKEIPATALGSAEKVTVTKESTTIVGGTGAQEDIAARIKQIDAEINLAQSSYDKEKLEERRAKLSGGVAVIRVGAATETEMKQKKQMFDDSLNSTKAALEEGIVPGGGVALLNASKTLGQLKLEGDEAVGAKIVLQACETPIKQIVQNTGFDGSVVLNEVLNSPANFGFNALTEKVEDLIAAGVIDPAKVIKNTLTYAASTAGIVLLSEALIADADDEEEENSTK.

Residues 31 to 34 (TLGP), G416, 479 to 481 (NAL), and D495 each bind ATP.

This sequence belongs to the chaperonin (HSP60) family. In terms of assembly, forms a cylinder of 14 subunits composed of two heptameric rings stacked back-to-back. Interacts with the co-chaperonin GroES.

The protein resides in the cytoplasm. It carries out the reaction ATP + H2O + a folded polypeptide = ADP + phosphate + an unfolded polypeptide.. In terms of biological role, together with its co-chaperonin GroES, plays an essential role in assisting protein folding. The GroEL-GroES system forms a nano-cage that allows encapsulation of the non-native substrate proteins and provides a physical environment optimized to promote and accelerate protein folding. The polypeptide is Chaperonin GroEL 3 (Protochlamydia amoebophila (strain UWE25)).